The following is a 347-amino-acid chain: UDP-N-acetylenolpyruvoylglucosamine reductase (347 aa).

Residues 15 to 187 (FGIEQTCSYL…TAIGLKLPKR (173 aa)) form the FAD-binding PCMH-type domain. Arginine 163 is a catalytic residue. Serine 233 serves as the catalytic Proton donor. Glutamate 328 is a catalytic residue.

The protein belongs to the MurB family. FAD is required as a cofactor.

It localises to the cytoplasm. The catalysed reaction is UDP-N-acetyl-alpha-D-muramate + NADP(+) = UDP-N-acetyl-3-O-(1-carboxyvinyl)-alpha-D-glucosamine + NADPH + H(+). The protein operates within cell wall biogenesis; peptidoglycan biosynthesis. In terms of biological role, cell wall formation. The sequence is that of UDP-N-acetylenolpyruvoylglucosamine reductase from Vibrio parahaemolyticus serotype O3:K6 (strain RIMD 2210633).